The following is a 133-amino-acid chain: Agglutinin alpha chain (133 aa).

The Jacalin-type lectin domain occupies 1–133 (GKAFDDGAFT…LDYFSMYLSL (133 aa)). The stretch at residues 7 to 64 (GAFTGIREINLSYNKETAIGDFQVVYDLNGSPYVGQNHKSFITGFTPVKISLDFPSEY) is a repeat. A glycan (N-linked (GlcNAc...) asparagine; when associated with variant T-45; partial) is linked at Asn-43. Residues 68–89 (VSGYTGNVSGYVVVRSLTFKTN) form an igA-binding region. An N-linked (GlcNAc...) asparagine; partial glycan is attached at Asn-74. A repeat spans 76-130 (SGYVVVRSLTFKTNKKTYGPYGVTSGTPFNLPIENGLIVGFKGSIGYWLDYFSMY).

The protein belongs to the jacalin lectin family. In terms of assembly, tetramer of four alpha chains associated with two or four beta chains.

D-galactose-specific lectin, binds the T-antigen structure Gal-beta1,3-GalNAc (Thomsen-Friedenreich-antigen-specific lectin). Potent and selective stimulant of distinct T- and B-cell functions. Shows a unique ability to specifically recognize IgA-1 from human serum. This Artocarpus integer (Jack fruit) protein is Agglutinin alpha chain.